We begin with the raw amino-acid sequence, 633 residues long: RpoH suppressor (633 aa).

The region spanning 11 to 410 (LVMKGGITSG…SSNFPIHLFD (400 aa)) is the PNPLA domain. A run of 3 helical transmembrane segments spans residues 38–58 (NIGGTSAGAIAAAACAAAAVG), 133–153 (IAPVETLLLLAALAGLAYAVG), and 159–179 (IAAALPAAICAYLGGVVFAVL). The GXSXG motif lies at 41–45 (GTSAG). Serine 43 (nucleophile) is an active-site residue. Positions 342 to 380 (ARRESLPGSDGENEAEDTTSDEDEQKTVLDSTEALTTGG) are disordered. The span at 352 to 365 (GENEAEDTTSDEDE) shows a compositional bias: acidic residues. The Proton acceptor role is filled by aspartate 397. The short motif at 397 to 399 (DGG) is the DGA/G element. Residues 605–624 (EGEKWSGEGPDLTKTAPRPL) form a disordered region.

The protein resides in the cell membrane. Its function is as follows. This protein is non-essential for R.meliloti growth, but induces a heat-shock response in temperature-sensitive E.coli K165 by elevating levels of sigma 32 (mechanism unknown). The polypeptide is RpoH suppressor (suhR) (Rhizobium meliloti (strain 1021) (Ensifer meliloti)).